Consider the following 723-residue polypeptide: Catalase-peroxidase (723 aa).

Residues 96–224 (WHAAGSYRVA…LAAVMMGLIY (129 aa)) constitute a cross-link (tryptophyl-tyrosyl-methioninium (Trp-Tyr) (with M-250)). Residue histidine 97 is the Proton acceptor of the active site. The tryptophyl-tyrosyl-methioninium (Tyr-Met) (with W-96) cross-link spans 224-250 (YVNPEGVDGQPDPLKTAQDVRVTFARM). A heme b-binding site is contributed by histidine 265.

The protein belongs to the peroxidase family. Peroxidase/catalase subfamily. In terms of assembly, homodimer or homotetramer. The cofactor is heme b. Formation of the three residue Trp-Tyr-Met cross-link is important for the catalase, but not the peroxidase activity of the enzyme.

The catalysed reaction is H2O2 + AH2 = A + 2 H2O. It carries out the reaction 2 H2O2 = O2 + 2 H2O. Its function is as follows. Bifunctional enzyme with both catalase and broad-spectrum peroxidase activity. This chain is Catalase-peroxidase, found in Leptothrix cholodnii (strain ATCC 51168 / LMG 8142 / SP-6) (Leptothrix discophora (strain SP-6)).